The chain runs to 69 residues: Bacteriocin microcin B17 (69 aa).

The propeptide occupies Met-1 to Gly-26. A cross-link (oxazole-4-carboxylic acid (Gly-Ser)) is located at residues Gly-39 to Ser-40. The segment at residues Ser-40–Cys-41 is a cross-link (thiazole-4-carboxylic acid (Ser-Cys)). Cross-links (thiazole-4-carboxylic acid (Gly-Cys)) lie at residues Gly-47–Cys-48, Gly-50–Cys-51, and Gly-54–Cys-55. A cross-link (oxazole-4-carboxylic acid (Cys-Ser)) is located at residues Cys-55 to Ser-56. 2 cross-links (oxazole-4-carboxylic acid (Gly-Ser)) span residues Gly-61–Ser-62 and Gly-64–Ser-65.

Post-translationally, the processed N-terminus does not resemble a typical secretion signal sequence. In terms of processing, maturation of thiazole and oxazole containing antibiotics involves the enzymatic condensation of a Cys, Ser or Thr with the alpha-carbonyl of the preceding amino acid to form a thioether or ether bond, then dehydration to form a double bond with the alpha-amino nitrogen. Thiazoline or oxazoline rings are dehydrogenated to form thiazole or oxazole rings.

Functionally, this glycine-rich peptide antibiotic inhibits DNA replication in many enteric bacteria, that leads to induction of the SOS repair system, massive DNA degradation and cell death. B17 inhibits type II topoisomerase by trapping an enzyme - DNA cleavable complex. The sequence is that of Bacteriocin microcin B17 (mcbA) from Escherichia coli.